The primary structure comprises 155 residues: Ribonuclease H (155 aa).

In terms of domain architecture, RNase H type-1 spans 1-146; it reads MNALFAWTDG…ADELARAGMA (146 aa). Positions 9, 52, 74, and 138 each coordinate Mg(2+).

Belongs to the RNase H family. In terms of assembly, monomer. Mg(2+) serves as cofactor.

It localises to the cytoplasm. It carries out the reaction Endonucleolytic cleavage to 5'-phosphomonoester.. Functionally, endonuclease that specifically degrades the RNA of RNA-DNA hybrids. The polypeptide is Ribonuclease H (Paracoccus denitrificans (strain Pd 1222)).